A 394-amino-acid chain; its full sequence is 1-deoxy-D-xylulose 5-phosphate reductoisomerase (394 aa).

Positions 12, 13, 14, 15, 39, 40, and 126 each coordinate NADPH. Lys-127 provides a ligand contact to 1-deoxy-D-xylulose 5-phosphate. Residue Glu-128 coordinates NADPH. Position 152 (Asp-152) interacts with Mn(2+). The 1-deoxy-D-xylulose 5-phosphate site is built by Ser-153, Glu-154, Ser-183, and His-206. Residue Glu-154 participates in Mn(2+) binding. Gly-212 is a binding site for NADPH. Positions 219, 224, 225, and 228 each coordinate 1-deoxy-D-xylulose 5-phosphate. Glu-228 is a binding site for Mn(2+).

It belongs to the DXR family. It depends on Mg(2+) as a cofactor. Mn(2+) is required as a cofactor.

The enzyme catalyses 2-C-methyl-D-erythritol 4-phosphate + NADP(+) = 1-deoxy-D-xylulose 5-phosphate + NADPH + H(+). Its pathway is isoprenoid biosynthesis; isopentenyl diphosphate biosynthesis via DXP pathway; isopentenyl diphosphate from 1-deoxy-D-xylulose 5-phosphate: step 1/6. Functionally, catalyzes the NADPH-dependent rearrangement and reduction of 1-deoxy-D-xylulose-5-phosphate (DXP) to 2-C-methyl-D-erythritol 4-phosphate (MEP). This Neisseria meningitidis serogroup A / serotype 4A (strain DSM 15465 / Z2491) protein is 1-deoxy-D-xylulose 5-phosphate reductoisomerase.